The chain runs to 200 residues: Putative HTH-type transcriptional regulator YhjB (200 aa).

The 66-residue stretch at 135–200 folds into the HTH luxR-type domain; sequence DIKDLKSLSA…QAAMMLNISS (66 aa). The segment at residues 159–178 is a DNA-binding region (H-T-H motif); it reads NKEIGRALNISTGTVKAHLE.

The polypeptide is Putative HTH-type transcriptional regulator YhjB (yhjB) (Escherichia coli (strain K12)).